Here is a 391-residue protein sequence, read N- to C-terminus: Phosphoglycerate kinase (391 aa).

Substrate is bound by residues 21–23 (DLN), arginine 36, 59–62 (HLGR), arginine 113, and arginine 146. Residues lysine 197, glutamate 319, and 345–348 (GGDT) each bind ATP.

The protein belongs to the phosphoglycerate kinase family. As to quaternary structure, monomer.

The protein localises to the cytoplasm. It carries out the reaction (2R)-3-phosphoglycerate + ATP = (2R)-3-phospho-glyceroyl phosphate + ADP. Its pathway is carbohydrate degradation; glycolysis; pyruvate from D-glyceraldehyde 3-phosphate: step 2/5. The polypeptide is Phosphoglycerate kinase (Shewanella putrefaciens (strain CN-32 / ATCC BAA-453)).